The chain runs to 148 residues: MYLLMAIFSGIKPNLYWNTKSDIFVDVKIEDIQQQLHFTFNEVNGHIDTNCYAVPREIAQKTSYSWNTSLIGDRSFLSALKSLGLIGQTSGKYTVKYRADFNKLIAVRRVFPQLSLSDEDNNNISAKILEVINQQNIEYYGGRPWAKE.

This is an uncharacterized protein from Haemophilus influenzae (strain ATCC 51907 / DSM 11121 / KW20 / Rd).